We begin with the raw amino-acid sequence, 101 residues long: Small ribosomal subunit protein bS18c (101 aa).

Belongs to the bacterial ribosomal protein bS18 family. Part of the 30S ribosomal subunit.

The protein resides in the plastid. It is found in the chloroplast. The polypeptide is Small ribosomal subunit protein bS18c (Lepidium virginicum (Virginia pepperweed)).